A 585-amino-acid chain; its full sequence is ATP-dependent lipid A-core flippase (585 aa).

A run of 5 helical transmembrane segments spans residues L24 to A44, L65 to G85, I143 to V163, W165 to V185, and P253 to P273. An ABC transmembrane type-1 domain is found at A29–R310. The 237-residue stretch at L342–L578 folds into the ABC transporter domain. G376–S383 is an ATP binding site.

Belongs to the ABC transporter superfamily. Lipid exporter (TC 3.A.1.106) family. Homodimer.

It is found in the cell inner membrane. It carries out the reaction ATP + H2O + lipid A-core oligosaccharideSide 1 = ADP + phosphate + lipid A-core oligosaccharideSide 2.. Involved in lipopolysaccharide (LPS) biosynthesis. Translocates lipid A-core from the inner to the outer leaflet of the inner membrane. Transmembrane domains (TMD) form a pore in the inner membrane and the ATP-binding domain (NBD) is responsible for energy generation. This chain is ATP-dependent lipid A-core flippase, found in Hahella chejuensis (strain KCTC 2396).